The sequence spans 457 residues: Acetylcholine receptor subunit alpha-1-A (457 aa).

Positions 1–20 (MDFVLTRLILLFLAATIIYS) are cleaved as a signal peptide. Over 21–230 (SEDESRLIND…ITYHFLLQRL (210 aa)) the chain is Extracellular. Disulfide bonds link Cys148–Cys162 and Cys212–Cys213. Asn161 carries an N-linked (GlcNAc...) asparagine glycan. 3 helical membrane-spanning segments follow: residues 231-255 (PLYF…VFYL), 263-281 (ITLS…LVIV), and 297-316 (YMLF…VIVI). Topologically, residues 317–428 (NTHHRSPSTH…WKFVAMVLDH (112 aa)) are cytoplasmic. A helical transmembrane segment spans residues 429–447 (LLLAVFMIVCIIGTLAIFA).

It belongs to the ligand-gated ion channel (TC 1.A.9) family. Acetylcholine receptor (TC 1.A.9.1) subfamily. Alpha-1/CHRNA1 sub-subfamily. In terms of assembly, one of the alpha chains that assemble within the acetylcholine receptor, a pentamer of two alpha chains, a beta, a delta, and a gamma or epsilon chains. As to expression, oocytes.

It is found in the postsynaptic cell membrane. The protein resides in the cell membrane. It catalyses the reaction K(+)(in) = K(+)(out). It carries out the reaction Na(+)(in) = Na(+)(out). Its function is as follows. Upon acetylcholine binding, the AChR responds by an extensive change in conformation that affects all subunits and leads to opening of an ion-conducting channel across the plasma membrane. The polypeptide is Acetylcholine receptor subunit alpha-1-A (chrna1-a) (Xenopus laevis (African clawed frog)).